Reading from the N-terminus, the 138-residue chain is UPF0201 protein PYRAB09730 (138 aa).

It belongs to the UPF0201 family.

The protein is UPF0201 protein PYRAB09730 of Pyrococcus abyssi (strain GE5 / Orsay).